A 1213-amino-acid chain; its full sequence is DNA-directed RNA polymerase subunit beta' (1213 aa).

Positions 60, 62, 75, and 78 each coordinate Zn(2+). Positions 450, 452, and 454 each coordinate Mg(2+). Residues Cys819, Cys893, Cys900, and Cys903 each contribute to the Zn(2+) site.

This sequence belongs to the RNA polymerase beta' chain family. In terms of assembly, the RNAP catalytic core consists of 2 alpha, 1 beta, 1 beta' and 1 omega subunit. When a sigma factor is associated with the core the holoenzyme is formed, which can initiate transcription. It depends on Mg(2+) as a cofactor. The cofactor is Zn(2+).

It catalyses the reaction RNA(n) + a ribonucleoside 5'-triphosphate = RNA(n+1) + diphosphate. Its function is as follows. DNA-dependent RNA polymerase catalyzes the transcription of DNA into RNA using the four ribonucleoside triphosphates as substrates. This is DNA-directed RNA polymerase subunit beta' from Streptococcus pyogenes serotype M6 (strain ATCC BAA-946 / MGAS10394).